A 491-amino-acid polypeptide reads, in one-letter code: Probable V-type proton ATPase subunit B 1 (491 aa).

Arg-380 contacts ATP.

Belongs to the ATPase alpha/beta chains family. In terms of assembly, V-ATPase is a heteromultimeric enzyme made up of two complexes: the ATP-hydrolytic V1 complex and the proton translocation V0 complex. The V1 complex consists of three catalytic AB heterodimers that form a heterohexamer, three peripheral stalks each consisting of EG heterodimers, one central rotor including subunits D and F, and the regulatory subunits C and H. The proton translocation complex V0 consists of the proton transport subunit a, a ring of proteolipid subunits c9c'', rotary subunit d, subunits e and f, and the accessory subunits vah-19/Ac45 and vah-20/PRR.

Functionally, non-catalytic subunit of the V1 complex of vacuolar(H+)-ATPase (V-ATPase), a multisubunit enzyme composed of a peripheral complex (V1) that hydrolyzes ATP and a membrane integral complex (V0) that translocates protons. V-ATPase is responsible for acidifying and maintaining the pH of intracellular compartments and in some cell types, is targeted to the plasma membrane, where it is responsible for acidifying the extracellular environment. Essential for the proper assembly and activity of V-ATPase. Required maternally for early embryogenesis and zygotically during morphogenesis. Specifically, involved in the clearance of apoptotic cell corpses in embryos. Also, during embryonic development, the V-ATPase is required to repress fusion of epidermal cells probably by negatively regulating eff-1-mediated cell fusion. In neurons, required for necrotic cell death by promoting intracellular acidification. Required for cell death induced by hypoxia. Required for acidification of synaptic vesicles and the release of neurotransmitters from adult neurons. The protein is Probable V-type proton ATPase subunit B 1 of Caenorhabditis briggsae.